Consider the following 149-residue polypeptide: Low molecular weight protein-tyrosine-phosphatase Wzb (149 aa).

Cys-9 (nucleophile) is an active-site residue. Arg-15 is an active-site residue. Asp-115 functions as the Proton donor in the catalytic mechanism.

It belongs to the low molecular weight phosphotyrosine protein phosphatase family.

It catalyses the reaction O-phospho-L-tyrosyl-[protein] + H2O = L-tyrosyl-[protein] + phosphate. It functions in the pathway glycan metabolism; exopolysaccharide biosynthesis. In terms of biological role, dephosphorylates Wzc. Required for the extracellular polysaccharide colanic acid synthesis. Probably involved in the export of colanic acid from the cell to medium. Involved in protection of cells against contact-dependent growth inhibition (CDI). This is Low molecular weight protein-tyrosine-phosphatase Wzb (wzb) from Salmonella typhi.